Consider the following 334-residue polypeptide: MYSVSIIGASGYSGAELTRLLLRHPGVELQELYAFSQAGKAVSELYPLLSSDKVYKPYGGECESDVYFLALPHGEALQLVPPLVKAGKTVIDLSGDFRLKSTVEHEQFYKQQKSPEAVMTYGMSELFREEIIKAKAISNPGCFATSIILGVAPLLLGNDSSINVRGINCTSTSGISGAGRSSKTELSFSEMSENIRAYKVGLHQHIPEIMQTLGTSVTTPSFDFTFTPMIGSLVRGIYSILTVNLENPAEAEQIKALYKEFYKEAPFVRVRDTMTEVRHVAHTNFCDIHIAHATANGTLIIVTAIDNLLKGAAGQAIQNMNLMLGMNEKTGLSF.

Residue Cys-142 is part of the active site.

This sequence belongs to the NAGSA dehydrogenase family. Type 1 subfamily.

The protein resides in the cytoplasm. The catalysed reaction is N-acetyl-L-glutamate 5-semialdehyde + phosphate + NADP(+) = N-acetyl-L-glutamyl 5-phosphate + NADPH + H(+). It participates in amino-acid biosynthesis; L-arginine biosynthesis; N(2)-acetyl-L-ornithine from L-glutamate: step 3/4. Its function is as follows. Catalyzes the NADPH-dependent reduction of N-acetyl-5-glutamyl phosphate to yield N-acetyl-L-glutamate 5-semialdehyde. This is N-acetyl-gamma-glutamyl-phosphate reductase from Pelodictyon phaeoclathratiforme (strain DSM 5477 / BU-1).